Consider the following 338-residue polypeptide: Holliday junction branch migration complex subunit RuvB (338 aa).

Residues 1-181 (MERAITPEKR…FGVISRLEFY (181 aa)) are large ATPase domain (RuvB-L). ATP is bound by residues L20, R21, G62, K65, T66, T67, 128 to 130 (EDF), R171, Y181, and R218. Mg(2+) is bound at residue T66. The segment at 182-252 (THDELAFIVT…VVQETLRLLE (71 aa)) is small ATPAse domain (RuvB-S). The tract at residues 255 to 338 (EMGFDQMDRM…TPERPQGSLF (84 aa)) is head domain (RuvB-H). DNA-binding residues include R310 and R315.

The protein belongs to the RuvB family. Homohexamer. Forms an RuvA(8)-RuvB(12)-Holliday junction (HJ) complex. HJ DNA is sandwiched between 2 RuvA tetramers; dsDNA enters through RuvA and exits via RuvB. An RuvB hexamer assembles on each DNA strand where it exits the tetramer. Each RuvB hexamer is contacted by two RuvA subunits (via domain III) on 2 adjacent RuvB subunits; this complex drives branch migration. In the full resolvosome a probable DNA-RuvA(4)-RuvB(12)-RuvC(2) complex forms which resolves the HJ.

The protein resides in the cytoplasm. It carries out the reaction ATP + H2O = ADP + phosphate + H(+). In terms of biological role, the RuvA-RuvB-RuvC complex processes Holliday junction (HJ) DNA during genetic recombination and DNA repair, while the RuvA-RuvB complex plays an important role in the rescue of blocked DNA replication forks via replication fork reversal (RFR). RuvA specifically binds to HJ cruciform DNA, conferring on it an open structure. The RuvB hexamer acts as an ATP-dependent pump, pulling dsDNA into and through the RuvAB complex. RuvB forms 2 homohexamers on either side of HJ DNA bound by 1 or 2 RuvA tetramers; 4 subunits per hexamer contact DNA at a time. Coordinated motions by a converter formed by DNA-disengaged RuvB subunits stimulates ATP hydrolysis and nucleotide exchange. Immobilization of the converter enables RuvB to convert the ATP-contained energy into a lever motion, pulling 2 nucleotides of DNA out of the RuvA tetramer per ATP hydrolyzed, thus driving DNA branch migration. The RuvB motors rotate together with the DNA substrate, which together with the progressing nucleotide cycle form the mechanistic basis for DNA recombination by continuous HJ branch migration. Branch migration allows RuvC to scan DNA until it finds its consensus sequence, where it cleaves and resolves cruciform DNA. This chain is Holliday junction branch migration complex subunit RuvB, found in Trichlorobacter lovleyi (strain ATCC BAA-1151 / DSM 17278 / SZ) (Geobacter lovleyi).